The sequence spans 391 residues: uncharacterized protein (391 aa).

Residues Val-235–Ser-330 form the HTH arsR-type domain.

This is an uncharacterized protein from Methanocaldococcus jannaschii (strain ATCC 43067 / DSM 2661 / JAL-1 / JCM 10045 / NBRC 100440) (Methanococcus jannaschii).